The sequence spans 326 residues: UDP-3-O-acylglucosamine N-acyltransferase (326 aa).

The Proton acceptor role is filled by His235.

The protein belongs to the transferase hexapeptide repeat family. LpxD subfamily. In terms of assembly, homotrimer.

It carries out the reaction a UDP-3-O-[(3R)-3-hydroxyacyl]-alpha-D-glucosamine + a (3R)-hydroxyacyl-[ACP] = a UDP-2-N,3-O-bis[(3R)-3-hydroxyacyl]-alpha-D-glucosamine + holo-[ACP] + H(+). It participates in bacterial outer membrane biogenesis; LPS lipid A biosynthesis. Catalyzes the N-acylation of UDP-3-O-acylglucosamine using 3-hydroxyacyl-ACP as the acyl donor. Is involved in the biosynthesis of lipid A, a phosphorylated glycolipid that anchors the lipopolysaccharide to the outer membrane of the cell. This is UDP-3-O-acylglucosamine N-acyltransferase from Helicobacter hepaticus (strain ATCC 51449 / 3B1).